A 405-amino-acid polypeptide reads, in one-letter code: Teichoic acid D-alanyltransferase (405 aa).

At 1 to 9 (MLNLQPYEN) the chain is on the extracellular side. A helical transmembrane segment spans residues 10–29 (PQYFVYLIIALLPVIIGMFK). At 30-33 (GFRM) the chain is on the cytoplasmic side. Residues 34-49 (HWYESIFSLVFLVLIF) traverse the membrane as a helical segment. Residues 50 to 53 (DADK) are Extracellular-facing. A helical transmembrane segment spans residues 54 to 80 (WPQGKALLGYVVFNLLLVYAYFKYRTR). At 81-86 (EGSKNS) the chain is on the cytoplasmic side. A helical membrane pass occupies residues 87 to 111 (TAVFYLSVALGIAHVAVVKFTPLFQ). Residues 112-121 (HHGSILGFLG) are Extracellular-facing. A helical membrane pass occupies residues 122–138 (ISYLTFRVVGTIMEIRD). Topologically, residues 139-145 (GSIKDLN) are cytoplasmic. Residues 146–175 (MWKFIQFLLFFPTISSGPIDRYRRFVKDYD) lie within the membrane without spanning it. At 176–179 (RVPD) the chain is on the cytoplasmic side. Residues 180–223 (PEHYAQLVTKAIHYLMLGFLYKFILGYIFGTLWLPSVEHMAMAS) form a helical membrane-spanning segment. Residues 224 to 232 (RGGAFLGLS) are Extracellular-facing. The chain crosses the membrane as a helical span at residues 233 to 264 (WPVVGVMYAYSGYLFFDFAGYSLFAVAISYLM). Residues 265–274 (GIETPMNFNK) lie on the Cytoplasmic side of the membrane. An intramembrane segment occupies 275–310 (PWSHITSRLLNRWQLSLSFWFRDYIYMRFVFFMMKH). Residues 311 to 315 (KWIKS) are Cytoplasmic-facing. Residues 316-335 (RVWTAFVGYLVLFLIMGIWH) form a helical membrane-spanning segment. The active site involves His-335. Residues 336 to 338 (GET) lie on the Extracellular side of the membrane. The helical transmembrane segment at 339-372 (WYYIVYGLFHAMLINLTDAWLRFKKKHKDFFPHN) threads the bilayer. The Cytoplasmic portion of the chain corresponds to 373-378 (RATHYP). Residues 379-399 (SPFSMTANAVCFSFLIFSGFL) form a helical membrane-spanning segment. The Extracellular portion of the chain corresponds to 400 to 405 (DKLWFH).

Belongs to the membrane-bound acyltransferase family.

The protein resides in the cell membrane. It functions in the pathway cell wall biogenesis; lipoteichoic acid biosynthesis. Functionally, O-acyltransferase that catalyzes D-alanylation of both teichoic acid and lipoteichoic acid (LTA). D-alanylation of LTA plays an important role in modulating the properties of the cell wall in Gram-positive bacteria, influencing the net charge of the cell wall. Catalyzes D-alanylation from DltC carrier protein. The sequence is that of Teichoic acid D-alanyltransferase from Lacticaseibacillus rhamnosus (Lactobacillus rhamnosus).